A 132-amino-acid chain; its full sequence is Small ribosomal subunit protein uS8c (132 aa).

It belongs to the universal ribosomal protein uS8 family. Part of the 30S ribosomal subunit.

The protein resides in the plastid. Its subcellular location is the chloroplast. In terms of biological role, one of the primary rRNA binding proteins, it binds directly to 16S rRNA central domain where it helps coordinate assembly of the platform of the 30S subunit. In Amborella trichopoda, this protein is Small ribosomal subunit protein uS8c (rps8).